A 766-amino-acid chain; its full sequence is Protein zer-1 homolog (766 aa).

A2 carries the post-translational modification N-acetylalanine. 3 LRR repeats span residues 226–245 (SLVLYNMDLSDDHIRVIVQL), 246–268 (HKLRHLDISRDRLSSYYKFKLTR), and 278–302 (LGNLMSLDISGHMILENCSISKMEE). 5 ARM repeats span residues 427–467 (RSEQ…NFSI), 511–556 (DNDH…NITD), 558–600 (TPDN…NVAE), 602–643 (KELR…HIMF), and 714–756 (PDKY…HCSN).

The protein belongs to the zyg-11 family. Interacts with the ELOC-ELOB/Elongin BC complex. Part of an E3 ubiquitin ligase complex including ZER1, CUL2 and Elongin BC. As to expression, expressed in testis, spermatocytes and spermatids (at protein level). Expressed in spermatocytes, spermatids, prostate, skeletal muscle, ovary, small intestine, heart, brain and pancreas.

Its function is as follows. Serves as substrate adapter subunit in the E3 ubiquitin ligase complex ZYG11B-CUL2-Elongin BC. Acts to target substrates bearing N-terminal degrons for proteasomal degradation with the first four residues of substrates being the key recognition elements. Involved in the clearance of proteolytic fragments generated by caspase cleavage during apoptosis since N-terminal glycine degrons are strongly enriched at caspase cleavage sites. Also important in the quality control of protein N-myristoylation in which N-terminal glycine degrons are conditionally exposed after a failure of N-myristoylation. This Homo sapiens (Human) protein is Protein zer-1 homolog.